The sequence spans 69 residues: Pleurain-A3 (69 aa).

Residues 1–22 form the signal peptide; sequence MFTLKKTLLLLFFLGTISISLC. A propeptide spanning residues 23–43 is cleaved from the precursor; sequence KQARDADEDDGRKMTEEEVKR. Cysteines 63 and 69 form a disulfide.

The protein belongs to the frog skin active peptide (FSAP) family. Pleurain subfamily. Expressed by the skin glands.

It localises to the secreted. In terms of biological role, antimicrobial peptide. Has activity against Gram-positive and -negative bacteria, and fungi. Has little hemolytic activity on red blood cells. In Nidirana pleuraden (Yunnan pond frog), this protein is Pleurain-A3.